We begin with the raw amino-acid sequence, 353 residues long: Nicotinate-nucleotide--dimethylbenzimidazole phosphoribosyltransferase (353 aa).

Glu318 functions as the Proton acceptor in the catalytic mechanism.

This sequence belongs to the CobT family.

The enzyme catalyses 5,6-dimethylbenzimidazole + nicotinate beta-D-ribonucleotide = alpha-ribazole 5'-phosphate + nicotinate + H(+). It participates in nucleoside biosynthesis; alpha-ribazole biosynthesis; alpha-ribazole from 5,6-dimethylbenzimidazole: step 1/2. In terms of biological role, catalyzes the synthesis of alpha-ribazole-5'-phosphate from nicotinate mononucleotide (NAMN) and 5,6-dimethylbenzimidazole (DMB). The sequence is that of Nicotinate-nucleotide--dimethylbenzimidazole phosphoribosyltransferase from Roseiflexus castenholzii (strain DSM 13941 / HLO8).